The primary structure comprises 194 residues: Large ribosomal subunit protein uL5 (194 aa).

It belongs to the universal ribosomal protein uL5 family. As to quaternary structure, part of the 50S ribosomal subunit; part of the 5S rRNA/L5/L18/L25 subcomplex. Contacts the 5S rRNA and the P site tRNA. Forms a bridge to the 30S subunit in the 70S ribosome.

This is one of the proteins that bind and probably mediate the attachment of the 5S RNA into the large ribosomal subunit, where it forms part of the central protuberance. In the 70S ribosome it contacts protein S13 of the 30S subunit (bridge B1b), connecting the 2 subunits; this bridge is implicated in subunit movement. Contacts the P site tRNA; the 5S rRNA and some of its associated proteins might help stabilize positioning of ribosome-bound tRNAs. In Chlorobium luteolum (strain DSM 273 / BCRC 81028 / 2530) (Pelodictyon luteolum), this protein is Large ribosomal subunit protein uL5.